Consider the following 197-residue polypeptide: Protein RESISTANCE TO PHYTOPHTHORA 1, chloroplastic (197 aa).

The transit peptide at 1–52 directs the protein to the chloroplast; that stretch reads MSWSLCSTHGVSSSIALTYGFRHRRRSTFRIFATSDGLEPKDDPPESPLPSS. The segment at 35–56 is disordered; it reads SDGLEPKDDPPESPLPSSSSAL. A run of 4 helical transmembrane segments spans residues 93 to 113, 120 to 140, 150 to 170, and 173 to 193; these read FEVQ…NLLF, LWRL…LRAR, LNYL…FWKS, and LVWS…LGWL.

The protein resides in the plastid. It is found in the chloroplast. It localises to the membrane. Plays a positive role in the immune response to the oomycetes P.brassicae, including induced oxidative burst (e.g. H(2)O(2)) and enhanced expression of defense-related genes. This chain is Protein RESISTANCE TO PHYTOPHTHORA 1, chloroplastic, found in Arabidopsis thaliana (Mouse-ear cress).